The chain runs to 1142 residues: Enamelin (1142 aa).

Residues 1 to 39 form the signal peptide; the sequence is MLVLRCRLGTSFPKLDNLVPKGKMKILLVFLGLLGNSVA. Disordered stretches follow at residues 88-193, 214-326, 398-671, 874-955, 1020-1048, and 1062-1092; these read QYQM…ISNE, YYSE…PNIR, PANL…QNRW, CCAG…LRRN, VIGT…QQQR, and LAKH…PTEN. A compositionally biased stretch (basic residues) spans 103-114; the sequence is HPRKSSAPKRHN. N-linked (GlcNAc...) asparagine glycosylation is found at Asn-114 and Asn-126. Residues 117–128 are compositionally biased toward polar residues; sequence DQTQETQKPNQT. The span at 140–162 shows a compositional bias: low complexity; that stretch reads KQPSHNQPQPEEEAQPPQAFPPF. Residues 170–186 show a composition bias toward pro residues; that stretch reads QQPPWQIPQRLPPPGYG. Phosphoserine occurs at positions 191 and 216. Basic and acidic residues predominate over residues 223 to 234; that stretch reads DFEKPKEEDPPK. The segment covering 240-285 has biased composition (polar residues); the sequence is TEPTANSTVTETNSTQPNPKGSQGGNDTSPTGNSTPGLNTGNNPPA. N-linked (GlcNAc...) asparagine glycosylation is found at Asn-245, Asn-252, Asn-265, and Asn-296. A compositionally biased stretch (basic and acidic residues) spans 429 to 442; the sequence is RNEKIQNPKEKPLG. Polar residues-rich tracts occupy residues 452-470, 507-516, and 531-544; these read KNPT…NKSN, SDGQTQSQNL, and SETN…SSYQ. Asn-467 carries N-linked (GlcNAc...) asparagine glycosylation. Asn-534 carries an N-linked (GlcNAc...) asparagine glycan. Residues 556-588 are compositionally biased toward basic and acidic residues; sequence AKEHFPAGRNTWDHQEISPPFKEDPGRQEEHLP. The span at 652 to 661 shows a compositional bias: acidic residues; sequence NEEDPVDPTG. Positions 924-934 are enriched in polar residues; that stretch reads SPTSILPGQRN. Asn-934 carries an N-linked (GlcNAc...) asparagine glycan. Positions 935–951 are enriched in basic and acidic residues; sequence SSEKRESQNPFRDDVST. N-linked (GlcNAc...) asparagine glycosylation is present at Asn-1040. The segment covering 1068 to 1078 has biased composition (polar residues); it reads STTGTPSSDGR.

In terms of processing, phosphorylated by FAM20C in vitro. Expressed in tooth particularly in odontoblast, ameloblast and cementoblast.

It is found in the secreted. It localises to the extracellular space. The protein resides in the extracellular matrix. In terms of biological role, involved in the mineralization and structural organization of enamel. Involved in the extension of enamel during the secretory stage of dental enamel formation. The polypeptide is Enamelin (ENAM) (Homo sapiens (Human)).